The sequence spans 313 residues: Aspartate carbamoyltransferase catalytic subunit (313 aa).

2 residues coordinate carbamoyl phosphate: arginine 58 and threonine 59. An L-aspartate-binding site is contributed by lysine 86. The carbamoyl phosphate site is built by arginine 108, histidine 136, and glutamine 139. The L-aspartate site is built by arginine 169 and arginine 223. Carbamoyl phosphate is bound by residues glycine 264 and proline 265.

The protein belongs to the aspartate/ornithine carbamoyltransferase superfamily. ATCase family. As to quaternary structure, heterododecamer (2C3:3R2) of six catalytic PyrB chains organized as two trimers (C3), and six regulatory PyrI chains organized as three dimers (R2).

The enzyme catalyses carbamoyl phosphate + L-aspartate = N-carbamoyl-L-aspartate + phosphate + H(+). It functions in the pathway pyrimidine metabolism; UMP biosynthesis via de novo pathway; (S)-dihydroorotate from bicarbonate: step 2/3. Catalyzes the condensation of carbamoyl phosphate and aspartate to form carbamoyl aspartate and inorganic phosphate, the committed step in the de novo pyrimidine nucleotide biosynthesis pathway. The protein is Aspartate carbamoyltransferase catalytic subunit of Ruminiclostridium cellulolyticum (strain ATCC 35319 / DSM 5812 / JCM 6584 / H10) (Clostridium cellulolyticum).